A 298-amino-acid chain; its full sequence is Triosephosphate isomerase, chloroplastic (298 aa).

Positions M1 to P18 are enriched in pro residues. The tract at residues M1 to A32 is disordered. Residues M1–M43 constitute a chloroplast transit peptide. Over residues R19–A32 the composition is skewed to low complexity. Substrate is bound by residues N54 and K56. Residue H138 is the Electrophile of the active site. C186 is subject to Cysteine derivative. E208 serves as the catalytic Proton acceptor.

It belongs to the triosephosphate isomerase family. Homodimer.

The protein resides in the plastid. It is found in the chloroplast. It carries out the reaction D-glyceraldehyde 3-phosphate = dihydroxyacetone phosphate. The protein operates within carbohydrate biosynthesis; Calvin cycle. The sequence is that of Triosephosphate isomerase, chloroplastic from Secale cereale (Rye).